The sequence spans 613 residues: Dihydroxy-acid dehydratase (613 aa).

Asp81 is a Mg(2+) binding site. Cys122 is a [2Fe-2S] cluster binding site. Mg(2+)-binding residues include Asp123 and Lys124. Residue Lys124 is modified to N6-carboxylysine. Cys195 contributes to the [2Fe-2S] cluster binding site. Mg(2+) is bound at residue Glu491. Catalysis depends on Ser517, which acts as the Proton acceptor.

Belongs to the IlvD/Edd family. Homodimer. The cofactor is [2Fe-2S] cluster. It depends on Mg(2+) as a cofactor.

It catalyses the reaction (2R)-2,3-dihydroxy-3-methylbutanoate = 3-methyl-2-oxobutanoate + H2O. The enzyme catalyses (2R,3R)-2,3-dihydroxy-3-methylpentanoate = (S)-3-methyl-2-oxopentanoate + H2O. It participates in amino-acid biosynthesis; L-isoleucine biosynthesis; L-isoleucine from 2-oxobutanoate: step 3/4. It functions in the pathway amino-acid biosynthesis; L-valine biosynthesis; L-valine from pyruvate: step 3/4. Functionally, functions in the biosynthesis of branched-chain amino acids. Catalyzes the dehydration of (2R,3R)-2,3-dihydroxy-3-methylpentanoate (2,3-dihydroxy-3-methylvalerate) into 2-oxo-3-methylpentanoate (2-oxo-3-methylvalerate) and of (2R)-2,3-dihydroxy-3-methylbutanoate (2,3-dihydroxyisovalerate) into 2-oxo-3-methylbutanoate (2-oxoisovalerate), the penultimate precursor to L-isoleucine and L-valine, respectively. The polypeptide is Dihydroxy-acid dehydratase (Vibrio vulnificus (strain YJ016)).